The primary structure comprises 512 residues: CaM kinase-like vesicle-associated protein (512 aa).

The Protein kinase domain occupies 24 to 286; it reads YDLGQVIKTE…AEEAISHEWI (263 aa). Residues 328–347 form a disordered region; it reads APEQSGTAATQSASDAATPG. Over residues 332-347 the composition is skewed to low complexity; it reads SGTAATQSASDAATPG. At Ser-392 the chain carries Phosphoserine. A disordered region spans residues 393 to 512; that stretch reads ADRSATPATD…AQESQRVETS (120 aa). A compositionally biased stretch (polar residues) spans 398 to 439; it reads TPATDGSATPATDGSVTPATDGSITPATDGSVTPATDRSATP. Thr-446 is modified (phosphothreonine). The segment covering 449–460 has biased composition (polar residues); it reads TEESTVPATQSS. Over residues 461–478 the composition is skewed to low complexity; it reads ALPAAKAAATPEPAVAQP. Position 470 is a phosphothreonine (Thr-470).

The protein belongs to the protein kinase superfamily. CAMK Ser/Thr protein kinase family. As to quaternary structure, interacts with calmodulin, in the presence of calcium. Ca(2+) serves as cofactor.

Its subcellular location is the cell membrane. It is found in the cytoplasmic vesicle membrane. Its function is as follows. Does not appear to have detectable kinase activity. The sequence is that of CaM kinase-like vesicle-associated protein (Camkv) from Mus musculus (Mouse).